Reading from the N-terminus, the 305-residue chain is tRNA pseudouridine synthase B (305 aa).

Asp-39 acts as the Nucleophile in catalysis.

Belongs to the pseudouridine synthase TruB family. Type 1 subfamily.

The enzyme catalyses uridine(55) in tRNA = pseudouridine(55) in tRNA. Its function is as follows. Responsible for synthesis of pseudouridine from uracil-55 in the psi GC loop of transfer RNAs. The chain is tRNA pseudouridine synthase B from Staphylococcus aureus (strain Newman).